The chain runs to 595 residues: Elongation factor 4 (595 aa).

Residues 1-183 (MNVRNFSIIA…AIVERIPPPP (183 aa)) enclose the tr-type G domain. GTP contacts are provided by residues 13–18 (DHGKST) and 130–133 (NKID).

The protein belongs to the TRAFAC class translation factor GTPase superfamily. Classic translation factor GTPase family. LepA subfamily.

It is found in the cell membrane. The enzyme catalyses GTP + H2O = GDP + phosphate + H(+). In terms of biological role, required for accurate and efficient protein synthesis under certain stress conditions. May act as a fidelity factor of the translation reaction, by catalyzing a one-codon backward translocation of tRNAs on improperly translocated ribosomes. Back-translocation proceeds from a post-translocation (POST) complex to a pre-translocation (PRE) complex, thus giving elongation factor G a second chance to translocate the tRNAs correctly. Binds to ribosomes in a GTP-dependent manner. This is Elongation factor 4 from Deinococcus geothermalis (strain DSM 11300 / CIP 105573 / AG-3a).